The following is a 1100-amino-acid chain: Beta-alanine-activating enzyme (1100 aa).

Positions 162–181 (HKVTDREDRVSAESRTPEKE) are disordered. ATP is bound by residues 197-205 (TSGTTGTPK), aspartate 427, arginine 441, and lysine 526. Positions 552-632 (EELWGKLQYL…DVYNHIVQAV (81 aa)) constitute a Carrier domain. O-(pantetheine 4'-phosphoryl)serine is present on serine 591. Residues 643 to 671 (SYTTKRKFSDADPEEASGKPARLESAWPS) are disordered. Residue serine 651 is modified to Phosphoserine.

It belongs to the ATP-dependent AMP-binding enzyme family.

Covalently binds beta-alanine in an ATP-dependent manner to form a thioester bond with its phosphopantetheine group and transfers it to an as yet unknown acceptor via an amide bond. May be required for a post-translational protein modification or for post-transcriptional modification of an RNA. The protein is Beta-alanine-activating enzyme (Aasdh) of Mus musculus (Mouse).